We begin with the raw amino-acid sequence, 813 residues long: Leucine--tRNA ligase (813 aa).

The 'HIGH' region signature appears at 41 to 51 (PYPSGTLHMGH). A 'KMSKS' region motif is present at residues 575-579 (KMSKS). Residue K578 participates in ATP binding.

Belongs to the class-I aminoacyl-tRNA synthetase family.

The protein localises to the cytoplasm. It carries out the reaction tRNA(Leu) + L-leucine + ATP = L-leucyl-tRNA(Leu) + AMP + diphosphate. This Francisella tularensis subsp. tularensis (strain FSC 198) protein is Leucine--tRNA ligase.